A 540-amino-acid chain; its full sequence is Chaperonin GroEL (540 aa).

Residues 29–32, 86–90, Gly413, 476–478, and Asp492 contribute to the ATP site; these read TLGP, DGTTT, and NAA.

This sequence belongs to the chaperonin (HSP60) family. Forms a cylinder of 14 subunits composed of two heptameric rings stacked back-to-back. Interacts with the co-chaperonin GroES.

Its subcellular location is the cytoplasm. The enzyme catalyses ATP + H2O + a folded polypeptide = ADP + phosphate + an unfolded polypeptide.. Together with its co-chaperonin GroES, plays an essential role in assisting protein folding. The GroEL-GroES system forms a nano-cage that allows encapsulation of the non-native substrate proteins and provides a physical environment optimized to promote and accelerate protein folding. In Tsukamurella paurometabola (Corynebacterium paurometabolum), this protein is Chaperonin GroEL.